The following is a 104-amino-acid chain: MVSYKARISLSGTEHRVVDRVCNEIKEIASRTGVEIHGPMPLPTKRLVVPVRKSPDGEGTNTWDHWEMRIHKRLIDVDADERTLRQLMRIPIPDGVQIEIQIKS.

The protein belongs to the universal ribosomal protein uS10 family. As to quaternary structure, part of the 30S ribosomal subunit.

Functionally, involved in the binding of tRNA to the ribosomes. This chain is Small ribosomal subunit protein uS10, found in Thermoplasma acidophilum (strain ATCC 25905 / DSM 1728 / JCM 9062 / NBRC 15155 / AMRC-C165).